The sequence spans 701 residues: Elongation factor G (701 aa).

Positions 8–291 (GRYRNIGIVA…AVIDYLPAPT (284 aa)) constitute a tr-type G domain. GTP is bound by residues 17–24 (AHVDAGKT), 89–93 (DTPGH), and 143–146 (NKMD).

This sequence belongs to the TRAFAC class translation factor GTPase superfamily. Classic translation factor GTPase family. EF-G/EF-2 subfamily.

It localises to the cytoplasm. Catalyzes the GTP-dependent ribosomal translocation step during translation elongation. During this step, the ribosome changes from the pre-translocational (PRE) to the post-translocational (POST) state as the newly formed A-site-bound peptidyl-tRNA and P-site-bound deacylated tRNA move to the P and E sites, respectively. Catalyzes the coordinated movement of the two tRNA molecules, the mRNA and conformational changes in the ribosome. This is Elongation factor G from Pseudomonas savastanoi pv. phaseolicola (strain 1448A / Race 6) (Pseudomonas syringae pv. phaseolicola (strain 1448A / Race 6)).